The primary structure comprises 174 residues: Male-enhanced antigen 1 (174 aa).

Disordered regions lie at residues methionine 1–aspartate 77 and leucine 94–aspartate 123. 3 stretches are compositionally biased toward acidic residues: residues serine 38–glutamate 48, proline 65–aspartate 77, and leucine 101–glycine 110. Position 103 is a phosphoserine (serine 103).

Functionally, may play an important role in spermatogenesis and/or testis development. This chain is Male-enhanced antigen 1 (MEA1), found in Sus scrofa (Pig).